The chain runs to 817 residues: MAMRSWTPDQGFVDRKLVRPASVSTSLSLELCTFPSTLGSSVAANALEQLLVVEKSLQGDYFTCNEEVKTFLKDITVAVKKLEEMRKNTIELLEIESMELSRLYFLLETVPNSMHKELQECILEARRLNILEISQVKGKIEKTNDEIKFLNDKIIELKNMNEALGIKQVELAKQHAKFVLLLNQTLEEKAVATICINDTYTRIKFEKEEIGLQKQCLQDATDLIEKHKQEHRKKKERLAERIKDVKQSCEEKRKEAYNKRKELTRLQNKIIKMKQTVTTNAVMINDKSLEIMRLRETADLWKKKVEDMKRVCESLEEKLLFFLTHKQQIDSVSSEKKSGFISQIQQVAEKLQKINKENKDLRDRLNTLLKQYKITLKEEEAMSLQRQKMAEEHQKQMELLNQKETFLTQRKLDIKNMEEGFSTLRDLNVATKEVYRKQIKLLTENLERELQRWVVNQWRLLCSRKRHSRWLHKTKLTLRKIITEIEIAEEKRRQLLKETKRRQKEISRFVNQIETIKEQLEVEEKEYIKKEKKLMKELNKYEDLIIKEAQINKVKEEQLVETLPRLQIAEDDFQEKSRTLKSLQNDISAKKQEETLLSTYIFRYRKDIIRCTNNTETVKRDMRHIRTLESEKTQSHFEALKNLENEIYVNDQKLALLILENKKLRDYLAYLKKHTKEYSEKQIVTVQNSGDLSWQLIAQHSQYSDLLAEFQIKIKELVDTGEETLQEIRSLASKLRYRDEKIESISAWLLGGIERLHSLMEEESPSSLSKEDLQKAGMKQKEEKTLRFSPSLHTRRDTLSRNCKMIKKRSRSPKNKP.

Coiled-coil stretches lie at residues 130 to 166 (ILEI…ALGI) and 217 to 594 (LQDA…KQEE). The tract at residues 761 to 817 (EEESPSSLSKEDLQKAGMKQKEEKTLRFSPSLHTRRDTLSRNCKMIKKRSRSPKNKP) is disordered. Residues 769 to 786 (SKEDLQKAGMKQKEEKTL) show a composition bias toward basic and acidic residues. Residues 804–817 (KMIKKRSRSPKNKP) show a composition bias toward basic residues.

This Rattus norvegicus (Rat) protein is Coiled-coil domain-containing protein 175 (Ccdc175).